We begin with the raw amino-acid sequence, 38 residues long: Alpha-amylase (38 aa).

It belongs to the glycosyl hydrolase 13 family. In terms of assembly, monomer. It depends on Ca(2+) as a cofactor. The cofactor is chloride. In terms of tissue distribution, expressed by the venom gland.

The protein resides in the secreted. The catalysed reaction is Endohydrolysis of (1-&gt;4)-alpha-D-glucosidic linkages in polysaccharides containing three or more (1-&gt;4)-alpha-linked D-glucose units.. The polypeptide is Alpha-amylase (Tityus serrulatus (Brazilian scorpion)).